The following is a 472-amino-acid chain: ATP synthase subunit beta (472 aa).

Position 157–164 (G157–T164) interacts with ATP.

This sequence belongs to the ATPase alpha/beta chains family. In terms of assembly, F-type ATPases have 2 components, CF(1) - the catalytic core - and CF(0) - the membrane proton channel. CF(1) has five subunits: alpha(3), beta(3), gamma(1), delta(1), epsilon(1). CF(0) has three main subunits: a(1), b(2) and c(9-12). The alpha and beta chains form an alternating ring which encloses part of the gamma chain. CF(1) is attached to CF(0) by a central stalk formed by the gamma and epsilon chains, while a peripheral stalk is formed by the delta and b chains.

It localises to the cell membrane. It carries out the reaction ATP + H2O + 4 H(+)(in) = ADP + phosphate + 5 H(+)(out). Its function is as follows. Produces ATP from ADP in the presence of a proton gradient across the membrane. The catalytic sites are hosted primarily by the beta subunits. The polypeptide is ATP synthase subunit beta (Desulforamulus reducens (strain ATCC BAA-1160 / DSM 100696 / MI-1) (Desulfotomaculum reducens)).